Reading from the N-terminus, the 422-residue chain is uncharacterized protein (422 aa).

The 79-residue stretch at 5–83 (CVVYVGNIPY…RRLRVDFPTA (79 aa)) folds into the RRM domain. A disordered region spans residues 337 to 358 (RSSSIPSSGSIRSPSLTTTSAQ).

The protein resides in the nucleus. This is an uncharacterized protein from Schizosaccharomyces pombe (strain 972 / ATCC 24843) (Fission yeast).